We begin with the raw amino-acid sequence, 246 residues long: MISDSMTVEEIRLHLGLALKEKDFVVDKTGVKTIEIIGASFVADEPFIFGALNDEYIQRELEWYKSKSLFVKDIPGETPKIWQQVASSKGEINSNYGWAIWSEDNYAQYDMCLAELGQNPDSRRGIMIYTRPSMQFDYNKDGMSDFMCTNTVQYLIRDKKINAVVNMRSNDVVFGFRNDYAWQKYVLDKLVSDLNAGDSTRQYKAGSIIWNVGSLHVYSRHFYLVDHWWKTGETHISKKDYVGKYA.

Residue Cys-148 is part of the active site.

Belongs to the thymidylate synthase family.

It catalyses the reaction dCMP + (6R)-5,10-methylene-5,6,7,8-tetrahydrofolate + H2O = 5-hydroxymethyl-dCMP + (6S)-5,6,7,8-tetrahydrofolate. This chain is Deoxycytidylate 5-hydroxymethyltransferase (42), found in Enterobacteria phage T4 (Bacteriophage T4).